The primary structure comprises 384 residues: 4-coumarate--CoA ligase (384 aa).

It belongs to the ATP-dependent AMP-binding enzyme family.

The catalysed reaction is (E)-4-coumarate + ATP + CoA = (E)-4-coumaroyl-CoA + AMP + diphosphate. Its function is as follows. Converts p-coumaric acid into p-coumaryl CoA. This is necessary for the activation of the photoactive yellow protein (PYP) chromophore. In Rhodobacter capsulatus (strain ATCC BAA-309 / NBRC 16581 / SB1003), this protein is 4-coumarate--CoA ligase (pcl).